A 430-amino-acid polypeptide reads, in one-letter code: Asparagine--tRNA ligase (430 aa).

The protein belongs to the class-II aminoacyl-tRNA synthetase family. In terms of assembly, homodimer.

It localises to the cytoplasm. The catalysed reaction is tRNA(Asn) + L-asparagine + ATP = L-asparaginyl-tRNA(Asn) + AMP + diphosphate + H(+). The polypeptide is Asparagine--tRNA ligase (Oceanobacillus iheyensis (strain DSM 14371 / CIP 107618 / JCM 11309 / KCTC 3954 / HTE831)).